Here is a 417-residue protein sequence, read N- to C-terminus: Tryptophan decarboxylase (417 aa).

Lys-263 is modified (N6-(pyridoxal phosphate)lysine).

It belongs to the group II decarboxylase family. Pyridoxal 5'-phosphate serves as cofactor.

The protein localises to the cytoplasm. The enzyme catalyses L-tryptophan + H(+) = tryptamine + CO2. Its activity is regulated as follows. Inhibited by (S)-alpha-fluoromethyltryptophan. Catalyzes the decarboxylation of tryptophan to tryptamine. Tryptamine is a neurotransmitter that induces the release of serotonin, which is suggested to modulate gastrointestinal motility. Therefore, the tryptophan decarboxylase from the gut bacteria Clostridium sporogenes (strain ATCC 15579) may influence host brain and behavior. Has weak activity with tyrosine. Activity against phenylalanine is undetectable. This is Tryptophan decarboxylase from Clostridium sporogenes (strain ATCC 15579).